The sequence spans 111 residues: Phosphoribosyl-ATP pyrophosphatase (111 aa).

It belongs to the PRA-PH family.

The protein localises to the cytoplasm. The catalysed reaction is 1-(5-phospho-beta-D-ribosyl)-ATP + H2O = 1-(5-phospho-beta-D-ribosyl)-5'-AMP + diphosphate + H(+). Its pathway is amino-acid biosynthesis; L-histidine biosynthesis; L-histidine from 5-phospho-alpha-D-ribose 1-diphosphate: step 2/9. In Pseudomonas putida (strain ATCC 700007 / DSM 6899 / JCM 31910 / BCRC 17059 / LMG 24140 / F1), this protein is Phosphoribosyl-ATP pyrophosphatase.